We begin with the raw amino-acid sequence, 637 residues long: DNA gyrase subunit B (637 aa).

Positions 421–535 (SEIYIVEGDS…HGYVYIAQPP (115 aa)) constitute a Toprim domain. Residues Glu-427, Asp-500, and Asp-502 each contribute to the Mg(2+) site.

It belongs to the type II topoisomerase GyrB family. Heterotetramer, composed of two GyrA and two GyrB chains. In the heterotetramer, GyrA contains the active site tyrosine that forms a transient covalent intermediate with DNA, while GyrB binds cofactors and catalyzes ATP hydrolysis. The cofactor is Mg(2+). It depends on Mn(2+) as a cofactor. Ca(2+) serves as cofactor.

It is found in the cytoplasm. It carries out the reaction ATP-dependent breakage, passage and rejoining of double-stranded DNA.. In terms of biological role, a type II topoisomerase that negatively supercoils closed circular double-stranded (ds) DNA in an ATP-dependent manner to modulate DNA topology and maintain chromosomes in an underwound state. Negative supercoiling favors strand separation, and DNA replication, transcription, recombination and repair, all of which involve strand separation. Also able to catalyze the interconversion of other topological isomers of dsDNA rings, including catenanes and knotted rings. Type II topoisomerases break and join 2 DNA strands simultaneously in an ATP-dependent manner. This is DNA gyrase subunit B from Halalkalibacterium halodurans (strain ATCC BAA-125 / DSM 18197 / FERM 7344 / JCM 9153 / C-125) (Bacillus halodurans).